The primary structure comprises 126 residues: C-type natriuretic peptide (126 aa).

The N-terminal stretch at 1 to 23 (MHLSQLIACALLLALLSLRPSEA) is a signal peptide. The interval 19-71 (RPSEAKPGTPPKVPRTPPGEELAEPQAAGGNQKKGDKTPGGGGANLKGDRSRL) is disordered. Residues 24 to 73 (KPGTPPKVPRTPPGEELAEPQAAGGNQKKGDKTPGGGGANLKGDRSRLLR) constitute a propeptide that is removed on maturation. Residues 26-35 (GTPPKVPRTP) show a composition bias toward pro residues. The cysteines at positions 110 and 126 are disulfide-linked.

Belongs to the natriuretic peptide family. Post-translationally, degraded by IDE (in vitro). As to expression, expressed exclusively in brain.

The protein localises to the secreted. Its function is as follows. Hormone which plays a role in endochondral ossification through regulation of cartilaginous growth plate chondrocytes proliferation and differentiation. May also be vasoactive and natriuretic. Acts by specifically binding and stimulating NPR2 to produce cGMP. Binds the clearance receptor NPR3. The polypeptide is C-type natriuretic peptide (Nppc) (Rattus norvegicus (Rat)).